Consider the following 485-residue polypeptide: Dual specificity protein phosphatase CDC14B (485 aa).

A disordered region spans residues 1 to 38 (MKRKSERRSAWATAPPCSRRSSSSSPGVKKSRSSTPQE). The Nucleolar localization signal motif lies at 1–54 (MKRKSERRSAWATAPPCSRRSSSSSPGVKKSRSSTPQELHRLEQQDDLYLDITD). Residues 15 to 28 (PPCSRRSSSSSPGV) are compositionally biased toward low complexity. Residues 44–198 (QQDDLYLDIT…AMQYGFFNFN (155 aa)) are a. The tract at residues 199–212 (SFNLDEYEHYEKAE) is linker. The b stretch occupies residues 213 to 379 (NGDFNWIIPE…EGDYFRQKLR (167 aa)). The Tyrosine-protein phosphatase domain maps to 215–374 (DFNWIIPERF…SSLWLEGDYF (160 aa)). The active-site Phosphocysteine intermediate is C314. Residues 402–424 (LNGLENQDNQEPEPYSDDDEVSG) are disordered. A compositionally biased stretch (acidic residues) spans 409–422 (DNQEPEPYSDDDEV).

It belongs to the protein-tyrosine phosphatase family. Non-receptor class CDC14 subfamily. In terms of assembly, interacts with FZR1/CDH1.

Its subcellular location is the nucleus. The protein resides in the nucleolus. It localises to the nucleoplasm. The catalysed reaction is O-phospho-L-tyrosyl-[protein] + H2O = L-tyrosyl-[protein] + phosphate. It carries out the reaction O-phospho-L-seryl-[protein] + H2O = L-seryl-[protein] + phosphate. The enzyme catalyses O-phospho-L-threonyl-[protein] + H2O = L-threonyl-[protein] + phosphate. Dual-specificity phosphatase involved in DNA damage response. Essential regulator of the G2 DNA damage checkpoint: following DNA damage, translocates to the nucleus and dephosphorylates FZR1/CDH1, a key activator of the anaphase promoting complex/cyclosome (APC/C). Dephosphorylates SIRT2 around early anaphase. Dephosphorylation of FZR1/CDH1 activates the APC/C, leading to the ubiquitination of PLK1, preventing entry into mitosis. Preferentially dephosphorylates proteins modified by proline-directed kinases. The polypeptide is Dual specificity protein phosphatase CDC14B (Cdc14b) (Mus musculus (Mouse)).